The chain runs to 518 residues: Ribonuclease Y (518 aa).

A helical membrane pass occupies residues 2 to 22 (GSIIISALLALVIGAVVGFFV). Residues 208-271 (TVSVVNLPND…ETARIALDKL (64 aa)) enclose the KH domain. The region spanning 334-427 (VLKHSVEVAF…VAAADALSAA (94 aa)) is the HD domain.

This sequence belongs to the RNase Y family.

The protein resides in the cell membrane. Functionally, endoribonuclease that initiates mRNA decay. In Geobacillus kaustophilus (strain HTA426), this protein is Ribonuclease Y.